Here is a 315-residue protein sequence, read N- to C-terminus: Calumenin-B (315 aa).

The signal sequence occupies residues 1–19; the sequence is MEQWPLLFVVALCILQSSS. Residues 22–39 show a composition bias toward basic and acidic residues; it reads MEKKDRVHHDAPLSNKDH. The segment at 22-42 is disordered; it reads MEKKDRVHHDAPLSNKDHDDE. EF-hand domains are found at residues 68–103, 104–139, 151–186, 188–223, 229–264, and 265–300; these read ESKERLGKIVEKIDEDHDGFVTADEMKRWIKHAQRR, WIYEDVDRQWQAHDLNSDSFVSWEEYKDATYGYILD, QMMTRDERRFKMADQDGDLRANKEEFTAFLHPEEFD, MKDIVVLETMEDIDKNGDGLIDLNEYIGDMYSQNGD, WVKTEREQFTEFRDKNKDGRMDKDETRDWILPADYD, and HAEAEAKHLLYESDADKDGRLTKQEIVDKYDLFVGS. Ca(2+) is bound by residues D81, D83, D85, E92, D117, N119, D121, E128, D164, D166, D168, R170, E175, D201, N203, D205, E212, D242, N244, D246, R248, E253, D278, D280, D282, R284, and E289. The Prevents secretion from ER motif lies at 312–315; that stretch reads HDEF.

It belongs to the CREC family. Interacts with ggcx.

The protein localises to the endoplasmic reticulum membrane. The protein resides in the golgi apparatus. Its subcellular location is the secreted. It localises to the melanosome. It is found in the sarcoplasmic reticulum lumen. In terms of biological role, involved in regulation of vitamin K-dependent carboxylation of multiple N-terminal glutamate residues. Seems to inhibit gamma-carboxylase ggcx. Binds 7 calcium ions with a low affinity. This Danio rerio (Zebrafish) protein is Calumenin-B (calub).